The chain runs to 842 residues: G-type lectin S-receptor-like serine/threonine-protein kinase At1g11330 (842 aa).

Residues 1–29 (MVVSVTIRRRFVLLLLACTCLLSRRLCFG) form the signal peptide. Over 30 to 444 (EDRITFSSPI…AHSELKTHSN (415 aa)) the chain is Extracellular. The 126-residue stretch at 32 to 157 (RITFSSPIKD…RNNGEILWES (126 aa)) folds into the Bulb-type lectin domain. 6 N-linked (GlcNAc...) asparagine glycosylation sites follow: N63, N94, N122, N130, N196, and N260. The region spanning 294–330 (PYTDCDAYGRCGRFGSCHAGENPPCKCVKGFVPKNNT) is the EGF-like; atypical domain. Cystine bridges form between C298/C310 and C304/C318. 4 N-linked (GlcNAc...) asparagine glycosylation sites follow: N328, N336, N354, and N396. The 87-residue stretch at 349 to 435 (CERQRNVSNG…SGIDLFIRVA (87 aa)) folds into the PAN domain. Cystine bridges form between C389–C410 and C393–C399. A helical transmembrane segment spans residues 445–465 (LAVMIAAPVIGVMLIAAVCVL). The Cytoplasmic segment spans residues 466-842 (LACRKYKKRP…DVSLTAVTGR (377 aa)). The Protein kinase domain maps to 524–810 (FSLRNKLGQG…SLADPKQPAF (287 aa)). Residues 530-538 (LGQGGFGPV) and K552 contribute to the ATP site. Phosphoserine occurs at positions 558 and 573. Residues 613 to 630 (MKQKILDWKTRFNIMEGI) form a caM-binding region. The active-site Proton acceptor is the D649. Phosphoserine is present on residues S653 and S666. The residue at position 683 (T683) is a Phosphothreonine. 4 positions are modified to phosphoserine: S726, S727, S821, and S830. A disordered region spans residues 814 to 842 (RGASEAESSDQSSQKVSINDVSLTAVTGR). Residues 818–827 (EAESSDQSSQ) are compositionally biased toward low complexity. Positions 828 to 842 (KVSINDVSLTAVTGR) are enriched in polar residues. T837 is modified (phosphothreonine).

Belongs to the protein kinase superfamily. Ser/Thr protein kinase family.

The protein resides in the cell membrane. The catalysed reaction is L-seryl-[protein] + ATP = O-phospho-L-seryl-[protein] + ADP + H(+). It carries out the reaction L-threonyl-[protein] + ATP = O-phospho-L-threonyl-[protein] + ADP + H(+). In Arabidopsis thaliana (Mouse-ear cress), this protein is G-type lectin S-receptor-like serine/threonine-protein kinase At1g11330.